The following is a 298-amino-acid chain: Bifunctional protein FolD (298 aa).

Residues 165 to 167 (GRS), serine 190, and isoleucine 231 contribute to the NADP(+) site.

The protein belongs to the tetrahydrofolate dehydrogenase/cyclohydrolase family. As to quaternary structure, homodimer.

The enzyme catalyses (6R)-5,10-methylene-5,6,7,8-tetrahydrofolate + NADP(+) = (6R)-5,10-methenyltetrahydrofolate + NADPH. It catalyses the reaction (6R)-5,10-methenyltetrahydrofolate + H2O = (6R)-10-formyltetrahydrofolate + H(+). It participates in one-carbon metabolism; tetrahydrofolate interconversion. Functionally, catalyzes the oxidation of 5,10-methylenetetrahydrofolate to 5,10-methenyltetrahydrofolate and then the hydrolysis of 5,10-methenyltetrahydrofolate to 10-formyltetrahydrofolate. This Prochlorococcus marinus (strain MIT 9301) protein is Bifunctional protein FolD.